We begin with the raw amino-acid sequence, 63 residues long: Hypoxia-inducible lipid droplet-associated protein (63 aa).

The interval methionine 1–glycine 37 is required for targeting to lipid droplets. The chain crosses the membrane as a helical span at residues leucine 7 to valine 23. The segment at leucine 31–methionine 63 is disordered. Over residues serine 35–proline 51 the composition is skewed to polar residues. Serine 44 carries the post-translational modification Phosphoserine.

As to expression, highly expressed in renal cell carcinoma cells but barely detectable in adjacent normal kidney tissue. Detected in some cervical and endometrial cancers. Expression also detected in fetal kidney with little or no expression observed in normal adult heart, liver, lung, pancreas, prostate or spinal cord (at protein level).

It localises to the lipid droplet. Its subcellular location is the secreted. It is found in the membrane. Increases intracellular lipid accumulation. Stimulates expression of cytokines including IL6, MIF and VEGFA. Enhances cell growth and proliferation. The protein is Hypoxia-inducible lipid droplet-associated protein (HILPDA) of Homo sapiens (Human).